The chain runs to 188 residues: NADH-quinone oxidoreductase subunit B (188 aa).

The [4Fe-4S] cluster site is built by cysteine 67, cysteine 68, cysteine 132, and cysteine 162.

This sequence belongs to the complex I 20 kDa subunit family. As to quaternary structure, NDH-1 is composed of 14 different subunits. Subunits NuoB, C, D, E, F, and G constitute the peripheral sector of the complex. [4Fe-4S] cluster is required as a cofactor.

Its subcellular location is the cell inner membrane. It carries out the reaction a quinone + NADH + 5 H(+)(in) = a quinol + NAD(+) + 4 H(+)(out). Functionally, NDH-1 shuttles electrons from NADH, via FMN and iron-sulfur (Fe-S) centers, to quinones in the respiratory chain. Couples the redox reaction to proton translocation (for every two electrons transferred, four hydrogen ions are translocated across the cytoplasmic membrane), and thus conserves the redox energy in a proton gradient. The protein is NADH-quinone oxidoreductase subunit B of Maricaulis maris (strain MCS10) (Caulobacter maris).